The following is a 120-amino-acid chain: uncharacterized protein (120 aa).

An N-acetyltransferase domain is found at 3–120 (IRYKKAFEKI…EKCEICHGSE (118 aa)).

This is an uncharacterized protein from Bacillus methanolicus.